Consider the following 487-residue polypeptide: Adenylosuccinate synthetase, chloroplastic (487 aa).

The transit peptide at 1 to 46 (MSLSTVNHAAAAAAAAGSGKSFSAAAPAAPSVRLPRTRAPAAAAVS) directs the protein to the chloroplast. Residues 74-80 (GDEGKGK) and 102-104 (GHT) each bind GTP. The active-site Proton acceptor is Asp-75. Residues Asp-75 and Gly-102 each coordinate Mg(2+). Residues 75 to 78 (DEGK), 100 to 103 (NAGH), Thr-192, Arg-206, Gln-286, Thr-301, and Arg-365 contribute to the IMP site. The Proton donor role is filled by His-103. 361 to 367 (TTTGRPR) lines the substrate pocket. GTP-binding positions include Arg-367, 393-395 (KLD), and 476-478 (GVG).

The protein belongs to the adenylosuccinate synthetase family. Homodimer. Requires Mg(2+) as cofactor.

It localises to the plastid. The protein resides in the chloroplast. It carries out the reaction IMP + L-aspartate + GTP = N(6)-(1,2-dicarboxyethyl)-AMP + GDP + phosphate + 2 H(+). It functions in the pathway purine metabolism; AMP biosynthesis via de novo pathway; AMP from IMP: step 1/2. In terms of biological role, plays an important role in the de novo pathway and in the salvage pathway of purine nucleotide biosynthesis. Catalyzes the first committed step in the biosynthesis of AMP from IMP. The sequence is that of Adenylosuccinate synthetase, chloroplastic from Oryza sativa subsp. indica (Rice).